The primary structure comprises 534 residues: Anther-specific proline-rich protein APG (534 aa).

Residues 1 to 35 (MKRSSLVDSCSYSRIFRSIFCLLSFCIFFLTTTNA) form the signal peptide. Residues 59–196 (NPPTPDPSPK…SPKPAPSPPK (138 aa)) are compositionally biased toward pro residues. Residues 59–202 (NPPTPDPSPK…SPPKPENKTI (144 aa)) are disordered. The active-site Nucleophile is the S211. Residues D508 and H511 contribute to the active site.

The protein belongs to the 'GDSL' lipolytic enzyme family. As to expression, found in sporophytic and gametophytic cell types in the anther, only in male fertile plants.

This is Anther-specific proline-rich protein APG (APG) from Arabidopsis thaliana (Mouse-ear cress).